The following is a 372-amino-acid chain: Queuine tRNA-ribosyltransferase (372 aa).

The Proton acceptor role is filled by D89. Residues 89–93 (DSGGF), D161, and G232 contribute to the substrate site. The RNA binding stretch occupies residues 262 to 268 (GIGDLPS). D281 (nucleophile) is an active-site residue. Residues 286–290 (TKAAR) form an RNA binding; important for wobble base 34 recognition region. C319, C321, C324, and H351 together coordinate Zn(2+).

The protein belongs to the queuine tRNA-ribosyltransferase family. Homodimer. Within each dimer, one monomer is responsible for RNA recognition and catalysis, while the other monomer binds to the replacement base PreQ1. Requires Zn(2+) as cofactor.

It carries out the reaction 7-aminomethyl-7-carbaguanine + guanosine(34) in tRNA = 7-aminomethyl-7-carbaguanosine(34) in tRNA + guanine. It functions in the pathway tRNA modification; tRNA-queuosine biosynthesis. Functionally, catalyzes the base-exchange of a guanine (G) residue with the queuine precursor 7-aminomethyl-7-deazaguanine (PreQ1) at position 34 (anticodon wobble position) in tRNAs with GU(N) anticodons (tRNA-Asp, -Asn, -His and -Tyr). Catalysis occurs through a double-displacement mechanism. The nucleophile active site attacks the C1' of nucleotide 34 to detach the guanine base from the RNA, forming a covalent enzyme-RNA intermediate. The proton acceptor active site deprotonates the incoming PreQ1, allowing a nucleophilic attack on the C1' of the ribose to form the product. After dissociation, two additional enzymatic reactions on the tRNA convert PreQ1 to queuine (Q), resulting in the hypermodified nucleoside queuosine (7-(((4,5-cis-dihydroxy-2-cyclopenten-1-yl)amino)methyl)-7-deazaguanosine). The sequence is that of Queuine tRNA-ribosyltransferase from Chlamydia muridarum (strain MoPn / Nigg).